A 367-amino-acid polypeptide reads, in one-letter code: Di-N-acetylchitobiase (367 aa).

The first 23 residues, methionine 1–alanine 23, serve as a signal peptide directing secretion. The region spanning glutamate 24–leucine 367 is the GH18 domain. Catalysis depends on glutamate 128, which acts as the Proton donor. Asparagine 178, asparagine 213, asparagine 247, and asparagine 284 each carry an N-linked (GlcNAc...) asparagine glycan.

It belongs to the glycosyl hydrolase 18 family.

The protein localises to the lysosome. Involved in the degradation of asparagine-linked glycoproteins. Hydrolyze of N-acetyl-beta-D-glucosamine (1-4)N-acetylglucosamine chitobiose core from the reducing end of the bond, it requires prior cleavage by glycosylasparaginase. The protein is Di-N-acetylchitobiase (Ctbs) of Rattus norvegicus (Rat).